The following is a 64-amino-acid chain: Metallothionein-A (64 aa).

Belongs to the metallothionein superfamily. Type 4 family.

Functionally, metallothioneins have a high content of cysteine residues that bind various heavy metals. The sequence is that of Metallothionein-A (MTA) from Strongylocentrotus purpuratus (Purple sea urchin).